The primary structure comprises 164 residues: Ribosomal RNA large subunit methyltransferase H (164 aa).

Gly109 provides a ligand contact to S-adenosyl-L-methionine.

Belongs to the RNA methyltransferase RlmH family. As to quaternary structure, homodimer.

The protein resides in the cytoplasm. The catalysed reaction is pseudouridine(1915) in 23S rRNA + S-adenosyl-L-methionine = N(3)-methylpseudouridine(1915) in 23S rRNA + S-adenosyl-L-homocysteine + H(+). Specifically methylates the pseudouridine at position 1915 (m3Psi1915) in 23S rRNA. The polypeptide is Ribosomal RNA large subunit methyltransferase H (Methylobacterium radiotolerans (strain ATCC 27329 / DSM 1819 / JCM 2831 / NBRC 15690 / NCIMB 10815 / 0-1)).